Here is a 289-residue protein sequence, read N- to C-terminus: ATP synthase gamma chain (289 aa).

This sequence belongs to the ATPase gamma chain family. As to quaternary structure, F-type ATPases have 2 components, CF(1) - the catalytic core - and CF(0) - the membrane proton channel. CF(1) has five subunits: alpha(3), beta(3), gamma(1), delta(1), epsilon(1). CF(0) has three main subunits: a, b and c.

It localises to the cell inner membrane. In terms of biological role, produces ATP from ADP in the presence of a proton gradient across the membrane. The gamma chain is believed to be important in regulating ATPase activity and the flow of protons through the CF(0) complex. In Azorhizobium caulinodans (strain ATCC 43989 / DSM 5975 / JCM 20966 / LMG 6465 / NBRC 14845 / NCIMB 13405 / ORS 571), this protein is ATP synthase gamma chain.